The following is a 562-amino-acid chain: NAD-dependent malic enzyme (562 aa).

Tyr101 serves as the catalytic Proton donor. Arg154 contributes to the NAD(+) binding site. Lys172 serves as the catalytic Proton acceptor. The a divalent metal cation site is built by Glu243, Asp244, and Asp267. Positions 267 and 415 each coordinate NAD(+).

This sequence belongs to the malic enzymes family. Homotetramer. It depends on Mg(2+) as a cofactor. Mn(2+) serves as cofactor.

The enzyme catalyses (S)-malate + NAD(+) = pyruvate + CO2 + NADH. It carries out the reaction oxaloacetate + H(+) = pyruvate + CO2. The protein is NAD-dependent malic enzyme of Shewanella sediminis (strain HAW-EB3).